We begin with the raw amino-acid sequence, 187 residues long: Threonylcarbamoyl-AMP synthase (187 aa).

The region spanning 4 to 187 (TLTLSEAVTA…DARSGHILRL (184 aa)) is the YrdC-like domain.

Belongs to the SUA5 family. TsaC subfamily.

The protein localises to the cytoplasm. It carries out the reaction L-threonine + hydrogencarbonate + ATP = L-threonylcarbamoyladenylate + diphosphate + H2O. Its function is as follows. Required for the formation of a threonylcarbamoyl group on adenosine at position 37 (t(6)A37) in tRNAs that read codons beginning with adenine. Catalyzes the conversion of L-threonine, HCO(3)(-)/CO(2) and ATP to give threonylcarbamoyl-AMP (TC-AMP) as the acyladenylate intermediate, with the release of diphosphate. The chain is Threonylcarbamoyl-AMP synthase from Xylella fastidiosa (strain M12).